Here is a 540-residue protein sequence, read N- to C-terminus: Hydroxylamine reductase (540 aa).

4 residues coordinate [4Fe-4S] cluster: C3, C6, C15, and C21. Positions 236, 260, 304, 395, 423, 448, 483, and 485 each coordinate hybrid [4Fe-2O-2S] cluster. A Cysteine persulfide modification is found at C395.

The protein belongs to the HCP family. It depends on [4Fe-4S] cluster as a cofactor. The cofactor is hybrid [4Fe-2O-2S] cluster.

Its subcellular location is the cytoplasm. The catalysed reaction is A + NH4(+) + H2O = hydroxylamine + AH2 + H(+). Catalyzes the reduction of hydroxylamine to form NH(3) and H(2)O. The sequence is that of Hydroxylamine reductase from Methanosarcina mazei (strain ATCC BAA-159 / DSM 3647 / Goe1 / Go1 / JCM 11833 / OCM 88) (Methanosarcina frisia).